The primary structure comprises 822 residues: Putative ESX-1 scaffolding and assembly protein SaeB (822 aa).

Its function is as follows. May be involved in assembly of the ESX-1 / type VII specialized secretion system (T7SS), which exports several proteins including EsxA and EsxB. Involved in DNA conjugation in recipient (MKD8) but not donor (mc(2)155) strain. This is Putative ESX-1 scaffolding and assembly protein SaeB (saeB) from Mycolicibacterium smegmatis (strain MKD8) (Mycobacterium smegmatis).